The following is a 292-amino-acid chain: 4-hydroxy-tetrahydrodipicolinate synthase (292 aa).

Thr45 is a pyruvate binding site. Catalysis depends on Tyr133, which acts as the Proton donor/acceptor. Lys161 (schiff-base intermediate with substrate) is an active-site residue. Position 203 (Ile203) interacts with pyruvate.

The protein belongs to the DapA family. As to quaternary structure, homotetramer; dimer of dimers.

The protein resides in the cytoplasm. The enzyme catalyses L-aspartate 4-semialdehyde + pyruvate = (2S,4S)-4-hydroxy-2,3,4,5-tetrahydrodipicolinate + H2O + H(+). Its pathway is amino-acid biosynthesis; L-lysine biosynthesis via DAP pathway; (S)-tetrahydrodipicolinate from L-aspartate: step 3/4. Functionally, catalyzes the condensation of (S)-aspartate-beta-semialdehyde [(S)-ASA] and pyruvate to 4-hydroxy-tetrahydrodipicolinate (HTPA). This chain is 4-hydroxy-tetrahydrodipicolinate synthase, found in Shigella dysenteriae serotype 1 (strain Sd197).